The chain runs to 446 residues: Putative diacyglycerol O-acyltransferase MT3481 (446 aa).

Catalysis depends on His129, which acts as the Proton acceptor. The tract at residues 425–446 (SRALPSAARRGRPSVPTARARH) is disordered.

Belongs to the long-chain O-acyltransferase family.

It carries out the reaction an acyl-CoA + a 1,2-diacyl-sn-glycerol = a triacyl-sn-glycerol + CoA. The protein operates within glycerolipid metabolism; triacylglycerol biosynthesis. The sequence is that of Putative diacyglycerol O-acyltransferase MT3481 from Mycobacterium tuberculosis (strain CDC 1551 / Oshkosh).